Reading from the N-terminus, the 428-residue chain is Probable oxidoreductase OrdL (428 aa).

The polypeptide is Probable oxidoreductase OrdL (ordL) (Rhizobium meliloti (strain 1021) (Ensifer meliloti)).